We begin with the raw amino-acid sequence, 206 residues long: Methyl-coenzyme M reductase operon protein C (206 aa).

As to quaternary structure, MCR is composed of three subunits: alpha, beta, and gamma. The function of proteins C and D is not known.

The polypeptide is Methyl-coenzyme M reductase operon protein C (mcrC) (Methanosarcina barkeri (strain Fusaro / DSM 804)).